The primary structure comprises 119 residues: Ig heavy chain V region T601 (119 aa).

Residues 1 to 112 (EVKLLESGGG…GYFDVWGAGT (112 aa)) enclose the Ig-like domain.

This is Ig heavy chain V region T601 from Mus musculus (Mouse).